We begin with the raw amino-acid sequence, 404 residues long: Argininosuccinate synthase (404 aa).

Residues 10-18 and A37 each bind ATP; that span reads AYSGGLDTS. Residues Y88 and S93 each coordinate L-citrulline. G118 contacts ATP. The L-aspartate site is built by T120, N124, and D125. Residue N124 coordinates L-citrulline. L-citrulline-binding residues include R128, S178, S187, E263, and Y275.

This sequence belongs to the argininosuccinate synthase family. Type 1 subfamily. In terms of assembly, homotetramer.

The protein resides in the cytoplasm. The catalysed reaction is L-citrulline + L-aspartate + ATP = 2-(N(omega)-L-arginino)succinate + AMP + diphosphate + H(+). The protein operates within amino-acid biosynthesis; L-arginine biosynthesis; L-arginine from L-ornithine and carbamoyl phosphate: step 2/3. This is Argininosuccinate synthase from Hahella chejuensis (strain KCTC 2396).